The following is a 44-amino-acid chain: Antimicrobial peptide 2 (44 aa).

Post-translationally, disulfide bonds. As to expression, expressed in flowers but not in leaves, seeds or roots (at protein level).

Functionally, antimicrobial peptide. Active against fungal species B.cinerea (IC(50)=5.2 uM), A.niger (IC(50)=2.6 uM) and B.sorokinina (IC(50)=5.2 uM) but not against F.oxysporum, F.graminearum and P.debaryanum at concentrations below 10 uM. Inhibits growth of P.infestans at concentration between 1.3 uM and 5.2 uM. Active against bacterial species P.syringae, B.subtilis, X.campestris and C.michiganense. The sequence is that of Antimicrobial peptide 2 from Taraxacum officinale (Common dandelion).